Reading from the N-terminus, the 188-residue chain is MTVGVLSLQGSFYEHLSILSRLNTDHIQVKTSEDLSRVTRLIIPGGESTAMLALTQKSGLFDLVRDRIMSGMPVYGTCAGMIMLSTFVEDFPNQKTLSCLDIAVRRNAFGRQINSFESEVSFLNSKITVPFIRAPKITQIGEGVDVLSRLESGDIVAVRQGNVMATAFHPELTGGAAVHEYFLHLGLE.

46-48 is an L-glutamine binding site; that stretch reads GES. Cysteine 78 functions as the Nucleophile in the catalytic mechanism. L-glutamine-binding positions include arginine 106 and 132–133; that span reads IR. Residues histidine 169 and glutamate 171 each act as charge relay system in the active site.

The protein belongs to the glutaminase PdxT/SNO family. In terms of assembly, in the presence of PdxS, forms a dodecamer of heterodimers. Only shows activity in the heterodimer.

It catalyses the reaction aldehydo-D-ribose 5-phosphate + D-glyceraldehyde 3-phosphate + L-glutamine = pyridoxal 5'-phosphate + L-glutamate + phosphate + 3 H2O + H(+). It carries out the reaction L-glutamine + H2O = L-glutamate + NH4(+). Its pathway is cofactor biosynthesis; pyridoxal 5'-phosphate biosynthesis. In terms of biological role, catalyzes the hydrolysis of glutamine to glutamate and ammonia as part of the biosynthesis of pyridoxal 5'-phosphate. The resulting ammonia molecule is channeled to the active site of PdxS. The protein is Pyridoxal 5'-phosphate synthase subunit PdxT of Tropheryma whipplei (strain TW08/27) (Whipple's bacillus).